A 123-amino-acid chain; its full sequence is MARIAGVDLPKNKRLDIALTYIYGVGRTTALKILDTVGIDWTLKTDDLSGEQVNTIRKELEDNYKVEGDLRRDQIADIKRLMDIGCYRGLRHRRGLPVRGQSSKTNARTRKGPRRSVMSRKKK.

Residues 95-123 are disordered; that stretch reads GLPVRGQSSKTNARTRKGPRRSVMSRKKK. Residues 107-123 show a composition bias toward basic residues; the sequence is ARTRKGPRRSVMSRKKK.

Belongs to the universal ribosomal protein uS13 family. As to quaternary structure, part of the 30S ribosomal subunit. Forms a loose heterodimer with protein S19. Forms two bridges to the 50S subunit in the 70S ribosome.

Located at the top of the head of the 30S subunit, it contacts several helices of the 16S rRNA. In the 70S ribosome it contacts the 23S rRNA (bridge B1a) and protein L5 of the 50S subunit (bridge B1b), connecting the 2 subunits; these bridges are implicated in subunit movement. Contacts the tRNAs in the A and P-sites. This is Small ribosomal subunit protein uS13 from Maridesulfovibrio salexigens (strain ATCC 14822 / DSM 2638 / NCIMB 8403 / VKM B-1763) (Desulfovibrio salexigens).